Reading from the N-terminus, the 766-residue chain is Sucrose synthase (766 aa).

Residues 220-698 (MVFNVVILSV…GLLRIKERYT (479 aa)) are GT-B glycosyltransferase.

The protein belongs to the glycosyltransferase 1 family. Plant sucrose synthase subfamily. Expressed most predominantly in tap root.

The catalysed reaction is an NDP-alpha-D-glucose + D-fructose = a ribonucleoside 5'-diphosphate + sucrose + H(+). Its function is as follows. Sucrose-cleaving enzyme that provides UDP-glucose and fructose for various metabolic pathways. In Beta vulgaris (Sugar beet), this protein is Sucrose synthase (SS1).